The primary structure comprises 455 residues: UDP-N-acetylmuramoylalanine--D-glutamate ligase (455 aa).

Residue 117-123 coordinates ATP; that stretch reads GTNGKTT.

The protein belongs to the MurCDEF family.

Its subcellular location is the cytoplasm. The enzyme catalyses UDP-N-acetyl-alpha-D-muramoyl-L-alanine + D-glutamate + ATP = UDP-N-acetyl-alpha-D-muramoyl-L-alanyl-D-glutamate + ADP + phosphate + H(+). Its pathway is cell wall biogenesis; peptidoglycan biosynthesis. Cell wall formation. Catalyzes the addition of glutamate to the nucleotide precursor UDP-N-acetylmuramoyl-L-alanine (UMA). The chain is UDP-N-acetylmuramoylalanine--D-glutamate ligase from Pelotomaculum thermopropionicum (strain DSM 13744 / JCM 10971 / SI).